Here is a 412-residue protein sequence, read N- to C-terminus: Multifunctional CCA protein (412 aa).

ATP-binding residues include G8 and R11. CTP is bound by residues G8 and R11. The Mg(2+) site is built by E21 and D23. Residues R91, R137, and R140 each contribute to the ATP site. Residues R91, R137, and R140 each contribute to the CTP site. The region spanning 228-329 (CGIHTLMSLQ…WRLLQRLDVL (102 aa)) is the HD domain.

This sequence belongs to the tRNA nucleotidyltransferase/poly(A) polymerase family. Bacterial CCA-adding enzyme type 1 subfamily. As to quaternary structure, monomer. Can also form homodimers and oligomers. Mg(2+) serves as cofactor. Requires Ni(2+) as cofactor.

It catalyses the reaction a tRNA precursor + 2 CTP + ATP = a tRNA with a 3' CCA end + 3 diphosphate. It carries out the reaction a tRNA with a 3' CCA end + 2 CTP + ATP = a tRNA with a 3' CCACCA end + 3 diphosphate. In terms of biological role, catalyzes the addition and repair of the essential 3'-terminal CCA sequence in tRNAs without using a nucleic acid template. Adds these three nucleotides in the order of C, C, and A to the tRNA nucleotide-73, using CTP and ATP as substrates and producing inorganic pyrophosphate. tRNA 3'-terminal CCA addition is required both for tRNA processing and repair. Also involved in tRNA surveillance by mediating tandem CCA addition to generate a CCACCA at the 3' terminus of unstable tRNAs. While stable tRNAs receive only 3'-terminal CCA, unstable tRNAs are marked with CCACCA and rapidly degraded. This Acinetobacter baumannii (strain SDF) protein is Multifunctional CCA protein.